A 226-amino-acid polypeptide reads, in one-letter code: Ribonuclease 3 (226 aa).

The 123-residue stretch at 6–128 folds into the RNase III domain; that stretch reads INRLQRKLGY…LIGGVFLDSD (123 aa). Glu41 is a Mg(2+) binding site. Residue Asp45 is part of the active site. 2 residues coordinate Mg(2+): Asp114 and Glu117. Glu117 is an active-site residue. Positions 155-225 constitute a DRBM domain; that stretch reads DPKTRLQEFL…AEQALIKLEL (71 aa).

The protein belongs to the ribonuclease III family. As to quaternary structure, homodimer. Requires Mg(2+) as cofactor.

It is found in the cytoplasm. The catalysed reaction is Endonucleolytic cleavage to 5'-phosphomonoester.. Its function is as follows. Digests double-stranded RNA. Involved in the processing of primary rRNA transcript to yield the immediate precursors to the large and small rRNAs (23S and 16S). Processes some mRNAs, and tRNAs when they are encoded in the rRNA operon. Processes pre-crRNA and tracrRNA of type II CRISPR loci if present in the organism. The polypeptide is Ribonuclease 3 (Serratia proteamaculans (strain 568)).